The chain runs to 329 residues: GTP 3',8-cyclase (329 aa).

One can recognise a Radical SAM core domain in the interval 8 to 234 (AFARKYYYLR…QLRQRSDGPA (227 aa)). Arg17 contacts GTP. [4Fe-4S] cluster contacts are provided by Cys24 and Cys28. Tyr30 provides a ligand contact to S-adenosyl-L-methionine. Position 31 (Cys31) interacts with [4Fe-4S] cluster. Arg68 is a binding site for GTP. Gly72 provides a ligand contact to S-adenosyl-L-methionine. Thr99 contributes to the GTP binding site. Ser123 contacts S-adenosyl-L-methionine. Position 160 (Lys160) interacts with GTP. Met194 is a binding site for S-adenosyl-L-methionine. Cys257 and Cys260 together coordinate [4Fe-4S] cluster. 262–264 (RLR) is a binding site for GTP. Cys274 contacts [4Fe-4S] cluster.

The protein belongs to the radical SAM superfamily. MoaA family. In terms of assembly, monomer and homodimer. The cofactor is [4Fe-4S] cluster.

It carries out the reaction GTP + AH2 + S-adenosyl-L-methionine = (8S)-3',8-cyclo-7,8-dihydroguanosine 5'-triphosphate + 5'-deoxyadenosine + L-methionine + A + H(+). It participates in cofactor biosynthesis; molybdopterin biosynthesis. In terms of biological role, catalyzes the cyclization of GTP to (8S)-3',8-cyclo-7,8-dihydroguanosine 5'-triphosphate. This chain is GTP 3',8-cyclase, found in Escherichia coli O17:K52:H18 (strain UMN026 / ExPEC).